The sequence spans 286 residues: Pantothenate synthetase (286 aa).

31–38 (MGALHDGH) is a binding site for ATP. The active-site Proton donor is His-38. Gln-62 contributes to the (R)-pantoate binding site. Gln-62 serves as a coordination point for beta-alanine. 148 to 151 (GKKD) lines the ATP pocket. Position 154 (Gln-154) interacts with (R)-pantoate. ATP is bound by residues Val-177 and 185 to 188 (KSSR).

Belongs to the pantothenate synthetase family. Homodimer.

The protein localises to the cytoplasm. The enzyme catalyses (R)-pantoate + beta-alanine + ATP = (R)-pantothenate + AMP + diphosphate + H(+). The protein operates within cofactor biosynthesis; (R)-pantothenate biosynthesis; (R)-pantothenate from (R)-pantoate and beta-alanine: step 1/1. Catalyzes the condensation of pantoate with beta-alanine in an ATP-dependent reaction via a pantoyl-adenylate intermediate. The protein is Pantothenate synthetase of Staphylococcus carnosus (strain TM300).